The primary structure comprises 291 residues: N-acetylmannosamine kinase (291 aa).

Residues 5 to 12 (AIDIGGTK) and 132 to 139 (GVGGGVVS) contribute to the ATP site. 4 residues coordinate Zn(2+): His-156, Cys-166, Cys-168, and Cys-173.

It belongs to the ROK (NagC/XylR) family. NanK subfamily. In terms of assembly, homodimer.

It catalyses the reaction an N-acyl-D-mannosamine + ATP = an N-acyl-D-mannosamine 6-phosphate + ADP + H(+). The protein operates within amino-sugar metabolism; N-acetylneuraminate degradation; D-fructose 6-phosphate from N-acetylneuraminate: step 2/5. In terms of biological role, catalyzes the phosphorylation of N-acetylmannosamine (ManNAc) to ManNAc-6-P. In Escherichia coli (strain SMS-3-5 / SECEC), this protein is N-acetylmannosamine kinase.